A 428-amino-acid polypeptide reads, in one-letter code: C4-dicarboxylate transport protein (428 aa).

9 consecutive transmembrane segments (helical) span residues 4 to 24 (SLFK…ILLG), 44 to 64 (LIKM…IAGM), 76 to 96 (VALL…LIIV), 142 to 162 (IGAF…LFGF), 184 to 204 (VIFG…FGAM), 222 to 242 (LIIC…GTIA), 289 to 309 (VVGL…SIYL), 326 to 346 (IFHQ…AAGV), and 352 to 372 (IVLA…LALI).

The protein belongs to the dicarboxylate/amino acid:cation symporter (DAACS) (TC 2.A.23) family.

The protein localises to the cell inner membrane. Responsible for the transport of dicarboxylates such as succinate, fumarate, and malate from the periplasm across the membrane. The protein is C4-dicarboxylate transport protein of Salmonella gallinarum (strain 287/91 / NCTC 13346).